The sequence spans 197 residues: ADP-ribosylation factor-like protein 16 (197 aa).

GTP-binding positions include 30–37 (GATGVGKT), 82–86 (ELGGC), and 139–142 (NKID).

The protein belongs to the small GTPase superfamily. Arf family. As to quaternary structure, interacts with RIGI; this interaction is GTP-dependent and induced upon viral infection; this interaction suppresses the RNA sensing activity of RIGI.

It localises to the cytoplasm. May suppress the RNA sensing activity of RIGI in a GTP-dependent. The protein is ADP-ribosylation factor-like protein 16 of Homo sapiens (Human).